We begin with the raw amino-acid sequence, 131 residues long: uncharacterized protein (131 aa).

The segment at 101–131 (SWWPPSGVVRGGPSSWPPSGVAEPREALGLP) is disordered.

This is an uncharacterized protein from Homo sapiens (Human).